The sequence spans 505 residues: Deoxyguanosinetriphosphate triphosphohydrolase (505 aa).

The HD domain maps to 66–273 (RLTHSMEVQQ…MEAADDISYC (208 aa)).

Belongs to the dGTPase family. Type 1 subfamily. Homotetramer. Mg(2+) is required as a cofactor.

It carries out the reaction dGTP + H2O = 2'-deoxyguanosine + triphosphate + H(+). Its function is as follows. dGTPase preferentially hydrolyzes dGTP over the other canonical NTPs. In Shigella boydii serotype 18 (strain CDC 3083-94 / BS512), this protein is Deoxyguanosinetriphosphate triphosphohydrolase.